Consider the following 156-residue polypeptide: Transcription antitermination protein NusB (156 aa).

Belongs to the NusB family.

Functionally, involved in transcription antitermination. Required for transcription of ribosomal RNA (rRNA) genes. Binds specifically to the boxA antiterminator sequence of the ribosomal RNA (rrn) operons. The chain is Transcription antitermination protein NusB from Mycolicibacterium paratuberculosis (strain ATCC BAA-968 / K-10) (Mycobacterium paratuberculosis).